Here is a 233-residue protein sequence, read N- to C-terminus: 2,3,4,5-tetrahydropyridine-2,6-dicarboxylate N-acetyltransferase (233 aa).

The protein belongs to the transferase hexapeptide repeat family. DapH subfamily.

The enzyme catalyses (S)-2,3,4,5-tetrahydrodipicolinate + acetyl-CoA + H2O = L-2-acetamido-6-oxoheptanedioate + CoA. It participates in amino-acid biosynthesis; L-lysine biosynthesis via DAP pathway; LL-2,6-diaminopimelate from (S)-tetrahydrodipicolinate (acetylase route): step 1/3. Catalyzes the transfer of an acetyl group from acetyl-CoA to tetrahydrodipicolinate. This is 2,3,4,5-tetrahydropyridine-2,6-dicarboxylate N-acetyltransferase from Thermotoga sp. (strain RQ2).